A 422-amino-acid polypeptide reads, in one-letter code: Enolase (422 aa).

Gln161 serves as a coordination point for (2R)-2-phosphoglycerate. The active-site Proton donor is Glu203. Residues Asp240, Glu283, and Asp310 each coordinate Mg(2+). (2R)-2-phosphoglycerate contacts are provided by Lys335, Arg364, Ser365, and Lys386. Lys335 functions as the Proton acceptor in the catalytic mechanism.

It belongs to the enolase family. Mg(2+) is required as a cofactor.

It localises to the cytoplasm. Its subcellular location is the secreted. It is found in the cell surface. The catalysed reaction is (2R)-2-phosphoglycerate = phosphoenolpyruvate + H2O. Its pathway is carbohydrate degradation; glycolysis; pyruvate from D-glyceraldehyde 3-phosphate: step 4/5. In terms of biological role, catalyzes the reversible conversion of 2-phosphoglycerate (2-PG) into phosphoenolpyruvate (PEP). It is essential for the degradation of carbohydrates via glycolysis. This is Enolase from Deinococcus radiodurans (strain ATCC 13939 / DSM 20539 / JCM 16871 / CCUG 27074 / LMG 4051 / NBRC 15346 / NCIMB 9279 / VKM B-1422 / R1).